Consider the following 245-residue polypeptide: tRNA pseudouridine synthase A (245 aa).

Asp52 functions as the Nucleophile in the catalytic mechanism. Tyr112 contributes to the substrate binding site.

The protein belongs to the tRNA pseudouridine synthase TruA family. Homodimer.

The enzyme catalyses uridine(38/39/40) in tRNA = pseudouridine(38/39/40) in tRNA. Formation of pseudouridine at positions 38, 39 and 40 in the anticodon stem and loop of transfer RNAs. In Dictyoglomus thermophilum (strain ATCC 35947 / DSM 3960 / H-6-12), this protein is tRNA pseudouridine synthase A.